Reading from the N-terminus, the 215-residue chain is Tail hub protein A (215 aa).

As to quaternary structure, heterotrimer with THB. The heterotrimers further assemble as 12 docking hubs that anchor the trimeric tail fibers.

Its subcellular location is the virion. Functionally, forms the tail hub together with tail hub protein B (THB). In Bacteroides phage crAss001 (Bacteroides phage PhiCrAss001), this protein is Tail hub protein A.